The sequence spans 61 residues: Large ribosomal subunit protein uL30 (61 aa).

Belongs to the universal ribosomal protein uL30 family. In terms of assembly, part of the 50S ribosomal subunit.

This Exiguobacterium sibiricum (strain DSM 17290 / CCUG 55495 / CIP 109462 / JCM 13490 / 255-15) protein is Large ribosomal subunit protein uL30.